The chain runs to 513 residues: Sucrose transport protein SUC1 (513 aa).

A compositionally biased stretch (basic and acidic residues) spans 1-11 (MGAYETEKPTK). The tract at residues 1 to 26 (MGAYETEKPTKDAAALETQSPEDFDQ) is disordered. Residues 1–32 (MGAYETEKPTKDAAALETQSPEDFDQPSPLRK) lie on the Cytoplasmic side of the membrane. Phosphoserine is present on S20. The helical transmembrane segment at 33-53 (IISVASIAAGVQFGWALQLSL) threads the bilayer. The Extracellular portion of the chain corresponds to 54–67 (LTPYVQLLGIPHKW). A helical transmembrane segment spans residues 68-88 (SSLIWLCGPVSGMIVQPIVGF). Topologically, residues 89–101 (HSDRCRSKFGRRR) are cytoplasmic. Residues 102–122 (PFIATGAALVAVAVFLIGYAA) traverse the membrane as a helical segment. At 123–139 (DFGYKMGDKLEEKVKVR) the chain is on the extracellular side. The helical transmembrane segment at 140-160 (AIGIFALGFWILDVANNTLQG) threads the bilayer. At 161–178 (PCRAFLADLAAGDAKRTR) the chain is on the cytoplasmic side. The chain crosses the membrane as a helical span at residues 179–199 (VANAFFSFFMAVGNVLGYAAG). Residues 200 to 224 (SYTNLHKMFPFTMTKACDIYCANLK) are Extracellular-facing. Residues 225–245 (TCFFLSITLLLIVTVTSLWYV) form a helical membrane-spanning segment. The Cytoplasmic segment spans residues 246 to 282 (NDKQWSPPPRNADDDEKTSSVPLFGEIFGAFKVMKRP). The chain crosses the membrane as a helical span at residues 283–303 (MWMLLIVTALNWIAWFPFLLF). At 304–334 (DTDWMGREVFGGDSDGNERSKKLYSLGVQSG) the chain is on the extracellular side. A helical membrane pass occupies residues 335–355 (AMGLMFNSIVLGFMSLGVEWI). Topologically, residues 356-365 (GRKLGGAKRL) are cytoplasmic. Residues 366–386 (WGIVNFILAAGLAMTVLVTKF) traverse the membrane as a helical segment. Residues 387 to 408 (AEDHRKTAGDLAGPSASVKAGA) are Extracellular-facing. The helical transmembrane segment at 409–429 (LSLFAVLGIPLAITFSTPFAL) threads the bilayer. At 430 to 441 (ASIFSSCSGAGQ) the chain is on the cytoplasmic side. Residues 442–462 (GLSLGVLNLAIVIPQMIVSLG) traverse the membrane as a helical segment. The Extracellular segment spans residues 463 to 474 (GGPFDALFGGGN). A helical transmembrane segment spans residues 475-495 (LPAFIVAAIAAAISGVLALTV). Residues 496–513 (LPSPPPDAPKATTMGGFH) lie on the Cytoplasmic side of the membrane.

Belongs to the glycoside-pentoside-hexuronide (GPH) cation symporter transporter (TC 2.A.2.4) family. In terms of tissue distribution, expressed in flowers (at protein level). Highly expressed in pollen. Expressed in pollen tubes and root vascular cylinder, pericycle and endodermis.

Its subcellular location is the membrane. The catalysed reaction is sucrose(out) + H(+)(out) = sucrose(in) + H(+)(in). Its pathway is glycan biosynthesis; sucrose metabolism. With respect to regulation, inhibited by DEPC, protonophores (e.g. dinitrophenol and carbonyl cyanide m-chlorophenyl-hydrazone (CCCP)), and SH group inhibitors (e.g. N-ethylmaleimide (NEM) and p-chloromercuriphenyl sulphonic acid (PCMPS)). Functionally, responsible for the transport of sucrose into the cell, with the concomitant uptake of protons (symport system). This transport is both voltage- and energy-dependent. Can also transport other glucosides such as maltose, alpha-phenylglucoside and beta-phenylglucoside. May also transport biotin. Required for normal pollen germination and anthocyanin accumulation induced by sucrose. In Arabidopsis thaliana (Mouse-ear cress), this protein is Sucrose transport protein SUC1.